The following is a 437-amino-acid chain: Phosphoglucosamine mutase (437 aa).

The active-site Phosphoserine intermediate is serine 93. The Mg(2+) site is built by serine 93, aspartate 230, aspartate 232, and aspartate 234. Phosphoserine is present on serine 93.

It belongs to the phosphohexose mutase family. The cofactor is Mg(2+). Post-translationally, activated by phosphorylation.

It catalyses the reaction alpha-D-glucosamine 1-phosphate = D-glucosamine 6-phosphate. Functionally, catalyzes the conversion of glucosamine-6-phosphate to glucosamine-1-phosphate. This Clavibacter michiganensis subsp. michiganensis (strain NCPPB 382) protein is Phosphoglucosamine mutase.